The sequence spans 860 residues: Leucine--tRNA ligase (860 aa).

The 'HIGH' region motif lies at 42 to 52; the sequence is PYPSGRLHMGH. Positions 619–623 match the 'KMSKS' region motif; the sequence is KMSKS. Position 622 (Lys622) interacts with ATP.

This sequence belongs to the class-I aminoacyl-tRNA synthetase family.

Its subcellular location is the cytoplasm. The enzyme catalyses tRNA(Leu) + L-leucine + ATP = L-leucyl-tRNA(Leu) + AMP + diphosphate. The protein is Leucine--tRNA ligase of Histophilus somni (strain 129Pt) (Haemophilus somnus).